A 300-amino-acid polypeptide reads, in one-letter code: Cation-efflux pump FieF (300 aa).

Residues L24–V44 traverse the membrane as a helical segment. Positions 45 and 49 each coordinate Zn(2+). 2 consecutive transmembrane segments (helical) span residues A82–I102 and P114–F134. Zn(2+) contacts are provided by H153 and D157. The next 2 membrane-spanning stretches (helical) occupy residues S156–H176 and A178–G198.

Belongs to the cation diffusion facilitator (CDF) transporter (TC 2.A.4) family. FieF subfamily. In terms of assembly, homodimer.

Its subcellular location is the cell inner membrane. The catalysed reaction is Zn(2+)(in) + H(+)(out) = Zn(2+)(out) + H(+)(in). It carries out the reaction Cd(2+)(in) + H(+)(out) = Cd(2+)(out) + H(+)(in). It catalyses the reaction Fe(2+)(in) + H(+)(out) = Fe(2+)(out) + H(+)(in). Functionally, divalent metal cation transporter which exports Zn(2+), Cd(2+) and possibly Fe(2+). May be involved in zinc and iron detoxification by efflux. This is Cation-efflux pump FieF from Salmonella agona (strain SL483).